A 331-amino-acid chain; its full sequence is Ketol-acid reductoisomerase (NADP(+)) (331 aa).

The 181-residue stretch at 2 to 182 (ARMYYDADAN…GGTRAGILET (181 aa)) folds into the KARI N-terminal Rossmann domain. NADP(+) contacts are provided by residues 25-28 (YGSQ), S51, S53, and 83-86 (DEVQ). H108 is a catalytic residue. G134 contacts NADP(+). Positions 183 to 328 (SFREETETDL…KDLRAMFSWL (146 aa)) constitute a KARI C-terminal knotted domain. Mg(2+)-binding residues include D191, E195, E227, and E231. S252 contacts substrate.

It belongs to the ketol-acid reductoisomerase family. The cofactor is Mg(2+).

It catalyses the reaction (2R)-2,3-dihydroxy-3-methylbutanoate + NADP(+) = (2S)-2-acetolactate + NADPH + H(+). It carries out the reaction (2R,3R)-2,3-dihydroxy-3-methylpentanoate + NADP(+) = (S)-2-ethyl-2-hydroxy-3-oxobutanoate + NADPH + H(+). It functions in the pathway amino-acid biosynthesis; L-isoleucine biosynthesis; L-isoleucine from 2-oxobutanoate: step 2/4. It participates in amino-acid biosynthesis; L-valine biosynthesis; L-valine from pyruvate: step 2/4. Functionally, involved in the biosynthesis of branched-chain amino acids (BCAA). Catalyzes an alkyl-migration followed by a ketol-acid reduction of (S)-2-acetolactate (S2AL) to yield (R)-2,3-dihydroxy-isovalerate. In the isomerase reaction, S2AL is rearranged via a Mg-dependent methyl migration to produce 3-hydroxy-3-methyl-2-ketobutyrate (HMKB). In the reductase reaction, this 2-ketoacid undergoes a metal-dependent reduction by NADPH to yield (R)-2,3-dihydroxy-isovalerate. This Crocosphaera subtropica (strain ATCC 51142 / BH68) (Cyanothece sp. (strain ATCC 51142)) protein is Ketol-acid reductoisomerase (NADP(+)).